Consider the following 126-residue polypeptide: Holo-[acyl-carrier-protein] synthase (126 aa).

Residues D9 and E58 each contribute to the Mg(2+) site.

This sequence belongs to the P-Pant transferase superfamily. AcpS family. Requires Mg(2+) as cofactor.

Its subcellular location is the cytoplasm. It carries out the reaction apo-[ACP] + CoA = holo-[ACP] + adenosine 3',5'-bisphosphate + H(+). Transfers the 4'-phosphopantetheine moiety from coenzyme A to a Ser of acyl-carrier-protein. This Hamiltonella defensa subsp. Acyrthosiphon pisum (strain 5AT) protein is Holo-[acyl-carrier-protein] synthase.